Here is a 152-residue protein sequence, read N- to C-terminus: Neuromedin-S (152 aa).

The signal sequence occupies residues 1 to 26; it reads MKHPFPQFPPILVIYCFCMLQIPSSG. 3 propeptides span residues 27-69, 70-105, and 106-108; these read ASPP…VYKR, FLFH…PSRR, and MKR. An Asparagine amide modification is found at Asn144. A propeptide spanning residues 147-152 is cleaved from the precursor; it reads YTDKVQ.

It belongs to the NmU family. In terms of tissue distribution, expressed in the CNS, spleen and testis. Specifically expressed in the suprachiasmatic nuclei (SCN) of the hypothalamus.

It localises to the secreted. Functionally, implicated in the regulation of circadian rhythms through autocrine and/or paracrine actions. Stimulates the contraction of rectum and elevation of blood pressure. The sequence is that of Neuromedin-S (Nms) from Rattus norvegicus (Rat).